The following is a 428-amino-acid chain: Stabilizer of axonemal microtubules 4 (428 aa).

Residues 201-231 are disordered; the sequence is AKEETGFTEESNKNPIVFQPPSQALPGDPVL.

As to quaternary structure, microtubule inner protein component of sperm flagellar doublet microtubules. Interacts with PPP1CA.

It is found in the cell projection. The protein resides in the cilium. The protein localises to the cytoplasm. It localises to the cytoskeleton. Its subcellular location is the flagellum axoneme. In Bos taurus (Bovine), this protein is Stabilizer of axonemal microtubules 4.